The chain runs to 424 residues: Oleosin-B3 (424 aa).

Positions 1–37 are polar; that stretch reads MRNEIQNETAQTDQTQGSMFSFFNLFPFLLPMFEVIK. 3 helical membrane passes run 16–36, 38–58, and 69–89; these read QGSM…FEVI, MVVA…TLSG, and LFII…VLAA. The tract at residues 38 to 119 is hydrophobic; that stretch reads MVVASVASVV…GIPESIKPSN (82 aa). 18 repeat units span residues 111–120, 121–130, 131–140, 141–150, 196–202, 203–209, 210–216, 217–223, 241–258, 259–276, 277–294, 301–318, 319–336, 337–354, 396–400, 401–405, 406–410, and 411–415. The interval 111–150 is 4 X 10 AA tandem repeats of I-P-[EV]-S-I-K-P-S-N-[IV]; sequence IPESIKPSNVIPESIKPSNIIPESIKPSNIIPVSIKPSNI. Residues 164–424 form a disordered region; sequence KIKAKQEEKS…SSHGSGGKHI (261 aa). Basic and acidic residues predominate over residues 167-220; the sequence is AKQEEKSKGKSEDSSKGKGKSKGEDTTTDEDKHGKGESKHGKGESKHGKGESTH. The interval 196-223 is 4 X 7 AA tandem repeats of E-[SD]-[KT]-H-G-K-G; the sequence is EDKHGKGESKHGKGESKHGKGESTHGKG. Residues 241-354 form a 6 X 18 AA tandem repeats of [KR]-H-[EG]-[SG]-G-G-[SA]-[PSA]-M-G-G-G-K-H-[GE]-S-[GV]-G region; sequence KHGSGGSPMG…MGGGKHGSGG (114 aa). The span at 242-255 shows a compositional bias: gly residues; it reads HGSGGSPMGGGKHG. Residues 288–304 show a composition bias toward basic and acidic residues; it reads GKHESVGKHGSGGKHES. A compositionally biased stretch (gly residues) spans 341–355; that stretch reads GGSAMGGGKHGSGGK. Positions 391–416 are enriched in low complexity; it reads SSTSESSDGSSSDGSSSDGSSSDGSS. The 4 X 5 AA tandem repeats of S-S-D-G-S stretch occupies residues 396 to 415; that stretch reads SSDGSSSDGSSSDGSSSDGS.

This sequence belongs to the oleosin family. As to expression, the full-length protein is found in the tapetal lipid bodies of immature anthers, the proteolytically cleaved C-terminal product is found on the coats of pollen grains. No expression is detected in other flower organs, siliques or seedlings.

The protein resides in the lipid droplet. Its subcellular location is the membrane. Functionally, many of the major pollen coat proteins are derived from endoproteolytic cleavage of oleosin-like proteins. The sequence is that of Oleosin-B3 from Brassica napus (Rape).